Reading from the N-terminus, the 136-residue chain is Large ribosomal subunit protein bL17 (136 aa).

This sequence belongs to the bacterial ribosomal protein bL17 family. As to quaternary structure, part of the 50S ribosomal subunit. Contacts protein L32.

This is Large ribosomal subunit protein bL17 from Rickettsia conorii (strain ATCC VR-613 / Malish 7).